Here is a 447-residue protein sequence, read N- to C-terminus: UPF0210 protein lhv_0606 (447 aa).

Belongs to the UPF0210 family. In terms of assembly, homodimer.

The protein is UPF0210 protein lhv_0606 of Lactobacillus helveticus (strain DPC 4571).